The following is an 84-amino-acid chain: Toxin To5 (84 aa).

The N-terminal stretch at 1-19 (MKAIIFFIGCLMLIDLVAG) is a signal peptide. The LCN-type CS-alpha/beta domain occupies 21-82 (RSGYPVTQKG…IWGSYPNNCG (62 aa)). Disulfide bonds link C31-C81, C35-C57, C43-C62, and C47-C64. C81 carries the post-translational modification Cysteine amide.

As to expression, expressed by the venom gland.

The protein localises to the secreted. Its function is as follows. Beta toxins bind voltage-independently at site-4 of sodium channels (Nav) and shift the voltage of activation toward more negative potentials thereby affecting sodium channel activation and promoting spontaneous and repetitive firing. The sequence is that of Toxin To5 from Tityus obscurus (Amazonian scorpion).